The chain runs to 86 residues: UPF0335 protein BruAb1_1737 (86 aa).

This sequence belongs to the UPF0335 family.

The chain is UPF0335 protein BruAb1_1737 from Brucella abortus biovar 1 (strain 9-941).